The following is a 67-amino-acid chain: Conotoxin Cl6.7 (67 aa).

The N-terminal stretch at 1–24 is a signal peptide; it reads MKVTAVLMVAVLVLTACQLTTANT. Positions 25–39 are excised as a propeptide; sequence TDYVRRIPARKSTMS. Disulfide bonds link Cys-43–Cys-58, Cys-50–Cys-62, and Cys-57–Cys-66.

It belongs to the conotoxin O1 superfamily. As to expression, expressed by the venom duct.

It is found in the secreted. The protein is Conotoxin Cl6.7 of Californiconus californicus (California cone).